Here is a 175-residue protein sequence, read N- to C-terminus: Adenine phosphoribosyltransferase (175 aa).

This sequence belongs to the purine/pyrimidine phosphoribosyltransferase family. Homodimer.

The protein resides in the cytoplasm. It catalyses the reaction AMP + diphosphate = 5-phospho-alpha-D-ribose 1-diphosphate + adenine. It functions in the pathway purine metabolism; AMP biosynthesis via salvage pathway; AMP from adenine: step 1/1. Catalyzes a salvage reaction resulting in the formation of AMP, that is energically less costly than de novo synthesis. The protein is Adenine phosphoribosyltransferase of Francisella tularensis subsp. tularensis (strain FSC 198).